The primary structure comprises 406 residues: F-box/WD repeat-containing protein mec-15 (406 aa).

Residues 6 to 53 form the F-box domain; sequence PTELISLPSELLCHLFTYLPQRQLITEIPLVCRRFNTILNDDKFWSRR. 5 WD repeats span residues 101 to 142, 156 to 195, 242 to 279, 281 to 320, and 365 to 406; these read GHSA…NGED, AHSG…ALQN, LHKR…KPVL, EYSP…VLQT, and SHEL…DQEN.

May interact with the SCF ubiquitin ligase complex component skr-1. As to expression, expressed in several neurons in the head, tail and ventral cord, but absent in touch receptor neurons in adults. Expressed in GABAergic and cholinergic motor neurons.

The protein localises to the perikaryon. Plays a role in mechanosensory transduction (touch sensitivity), touch receptor neuron development and synapse formation. Regulates expression of the protein snb-1 and the distribution of synaptic vesicles at synapses to promote synaptic transmission at the neuromuscular junctions of GABAergic motor neurons. This chain is F-box/WD repeat-containing protein mec-15, found in Caenorhabditis elegans.